Here is a 262-residue protein sequence, read N- to C-terminus: Thiazole synthase (262 aa).

The active-site Schiff-base intermediate with DXP is the Lys-97. 1-deoxy-D-xylulose 5-phosphate contacts are provided by residues Gly-158, 185–186, and 207–208; these read AG and NT. The segment at 243–262 is disordered; that stretch reads DKAQASTPTVGQPFWHSAEY.

It belongs to the ThiG family. In terms of assembly, homotetramer. Forms heterodimers with either ThiH or ThiS.

The protein resides in the cytoplasm. The enzyme catalyses [ThiS sulfur-carrier protein]-C-terminal-Gly-aminoethanethioate + 2-iminoacetate + 1-deoxy-D-xylulose 5-phosphate = [ThiS sulfur-carrier protein]-C-terminal Gly-Gly + 2-[(2R,5Z)-2-carboxy-4-methylthiazol-5(2H)-ylidene]ethyl phosphate + 2 H2O + H(+). It functions in the pathway cofactor biosynthesis; thiamine diphosphate biosynthesis. Catalyzes the rearrangement of 1-deoxy-D-xylulose 5-phosphate (DXP) to produce the thiazole phosphate moiety of thiamine. Sulfur is provided by the thiocarboxylate moiety of the carrier protein ThiS. In vitro, sulfur can be provided by H(2)S. The chain is Thiazole synthase from Neisseria meningitidis serogroup B (strain ATCC BAA-335 / MC58).